The following is a 300-amino-acid chain: Phosphatidylglycerol--prolipoprotein diacylglyceryl transferase (300 aa).

Helical transmembrane passes span 17-37, 59-79, 94-114, 129-149, 204-224, 230-250, and 265-285; these read LAIR…LWFG, MLFY…VLFY, VWEG…AMML, FIAP…FING, SQIY…WLYA, MGAV…AAEF, and LSMG…MLVW. Arginine 142 is an a 1,2-diacyl-sn-glycero-3-phospho-(1'-sn-glycerol) binding site.

This sequence belongs to the Lgt family.

It is found in the cell inner membrane. It carries out the reaction L-cysteinyl-[prolipoprotein] + a 1,2-diacyl-sn-glycero-3-phospho-(1'-sn-glycerol) = an S-1,2-diacyl-sn-glyceryl-L-cysteinyl-[prolipoprotein] + sn-glycerol 1-phosphate + H(+). It participates in protein modification; lipoprotein biosynthesis (diacylglyceryl transfer). Its function is as follows. Catalyzes the transfer of the diacylglyceryl group from phosphatidylglycerol to the sulfhydryl group of the N-terminal cysteine of a prolipoprotein, the first step in the formation of mature lipoproteins. In Ralstonia pickettii (strain 12J), this protein is Phosphatidylglycerol--prolipoprotein diacylglyceryl transferase.